The chain runs to 222 residues: uncharacterized protein (222 aa).

G2 is lipidated: N-myristoyl glycine; by host.

Belongs to the mimivirus R683/R861 family.

This is an uncharacterized protein from Acanthamoeba polyphaga mimivirus (APMV).